Here is a 213-residue protein sequence, read N- to C-terminus: Ribosomal RNA large subunit methyltransferase E (213 aa).

Gly-60, Trp-62, Asp-80, Asp-96, and Asp-121 together coordinate S-adenosyl-L-methionine. Lys-161 (proton acceptor) is an active-site residue.

It belongs to the class I-like SAM-binding methyltransferase superfamily. RNA methyltransferase RlmE family.

The protein resides in the cytoplasm. The catalysed reaction is uridine(2552) in 23S rRNA + S-adenosyl-L-methionine = 2'-O-methyluridine(2552) in 23S rRNA + S-adenosyl-L-homocysteine + H(+). Specifically methylates the uridine in position 2552 of 23S rRNA at the 2'-O position of the ribose in the fully assembled 50S ribosomal subunit. The polypeptide is Ribosomal RNA large subunit methyltransferase E (Xylella fastidiosa (strain 9a5c)).